We begin with the raw amino-acid sequence, 978 residues long: Transcription factor MYCGRDRAFT_87993 (978 aa).

2 consecutive C2H2-type zinc fingers follow at residues 2–24 (VFCT…ILTH) and 30–52 (FKCF…YTVH). A DNA-binding region (zn(2)-C6 fungal-type) is located at residues 79 to 105 (CSNCAKTKTKCDKKFPCSRCAGRNLRC). Disordered stretches follow at residues 113–231 (ASKN…SPRF) and 426–445 (THRE…PSGA). Residues 152-165 (SSSPSSQKSGTPIS) show a composition bias toward low complexity. Residues 432 to 445 (GTSNGSHSPNPSGA) show a composition bias toward polar residues.

It localises to the nucleus. Its function is as follows. Transcription factor; part of the gene cluster 29 that mediates the biosynthesis of dihydroxynaphthalene (DHN)-melanin, a bluish-green pigment forming a dark layer in the conidial wall that protects the conidia from UV radiations. The chain is Transcription factor MYCGRDRAFT_87993 from Zymoseptoria tritici (strain CBS 115943 / IPO323) (Speckled leaf blotch fungus).